The sequence spans 110 residues: MTDSEYMDRAEAALAAIEQGCDRINDATDADIDNQRVGGMITISFKNGSQLIVNLQKPLQEIWLAARSGGYHYRYDGKAWVDTKTGEEFFGNLSREASLQAGQPLEFAAA.

It belongs to the frataxin family.

Its function is as follows. Involved in iron-sulfur (Fe-S) cluster assembly. May act as a regulator of Fe-S biogenesis. The chain is Iron-sulfur cluster assembly protein CyaY from Variovorax paradoxus (strain S110).